The sequence spans 1154 residues: DNA-directed RNA polymerase subunit beta' (1154 aa).

Residues Cys-60, Cys-62, Cys-75, and Cys-78 each contribute to the Zn(2+) site. Asp-449, Asp-451, and Asp-453 together coordinate Mg(2+). Zn(2+) is bound by residues Cys-774, Cys-848, Cys-855, and Cys-858.

It belongs to the RNA polymerase beta' chain family. In terms of assembly, the RNAP catalytic core consists of 2 alpha, 1 beta, 1 beta' and 1 omega subunit. When a sigma factor is associated with the core the holoenzyme is formed, which can initiate transcription. Requires Mg(2+) as cofactor. Zn(2+) is required as a cofactor.

The enzyme catalyses RNA(n) + a ribonucleoside 5'-triphosphate = RNA(n+1) + diphosphate. In terms of biological role, DNA-dependent RNA polymerase catalyzes the transcription of DNA into RNA using the four ribonucleoside triphosphates as substrates. This Desulforudis audaxviator (strain MP104C) protein is DNA-directed RNA polymerase subunit beta'.